A 133-amino-acid chain; its full sequence is MPTIQQLVRKGREVLVEKSKSPALDSCPQRRGVCVRVYTTTPKKPNSAMRKVARVRLTNQKEVNSYIPGEGHNLQEHSIVLVRGGRVKDLPGVRYHIVRGTLDTAGVAGRTQRRSKYGAKRPKPGQAAPAKKK.

Asp-89 is subject to 3-methylthioaspartic acid. A disordered region spans residues Asp-103–Lys-133. Residues Thr-111 to Lys-123 show a composition bias toward basic residues. The span at Pro-124–Lys-133 shows a compositional bias: low complexity.

Belongs to the universal ribosomal protein uS12 family. As to quaternary structure, part of the 30S ribosomal subunit. Contacts proteins S8 and S17. May interact with IF1 in the 30S initiation complex.

With S4 and S5 plays an important role in translational accuracy. Its function is as follows. Interacts with and stabilizes bases of the 16S rRNA that are involved in tRNA selection in the A site and with the mRNA backbone. Located at the interface of the 30S and 50S subunits, it traverses the body of the 30S subunit contacting proteins on the other side and probably holding the rRNA structure together. The combined cluster of proteins S8, S12 and S17 appears to hold together the shoulder and platform of the 30S subunit. The sequence is that of Small ribosomal subunit protein uS12 from Bacteroides thetaiotaomicron (strain ATCC 29148 / DSM 2079 / JCM 5827 / CCUG 10774 / NCTC 10582 / VPI-5482 / E50).